We begin with the raw amino-acid sequence, 71 residues long: Small ribosomal subunit protein bS21 (71 aa).

It belongs to the bacterial ribosomal protein bS21 family.

The chain is Small ribosomal subunit protein bS21 from Shewanella amazonensis (strain ATCC BAA-1098 / SB2B).